Consider the following 436-residue polypeptide: 3-ketoacyl-CoA thiolase (436 aa).

The active-site Acyl-thioester intermediate is C99. Active-site proton acceptor residues include H392 and C422.

Belongs to the thiolase-like superfamily. Thiolase family. Heterotetramer of two alpha chains (FadJ) and two beta chains (FadI).

Its subcellular location is the cytoplasm. It carries out the reaction an acyl-CoA + acetyl-CoA = a 3-oxoacyl-CoA + CoA. It functions in the pathway lipid metabolism; fatty acid beta-oxidation. Catalyzes the final step of fatty acid oxidation in which acetyl-CoA is released and the CoA ester of a fatty acid two carbons shorter is formed. This is 3-ketoacyl-CoA thiolase from Escherichia coli (strain ATCC 8739 / DSM 1576 / NBRC 3972 / NCIMB 8545 / WDCM 00012 / Crooks).